The following is a 377-amino-acid chain: Probable tRNA pseudouridine synthase D (377 aa).

Catalysis depends on D89, which acts as the Nucleophile. A TRUD domain is found at 160-377 (YLPAFIGYQR…ILRGDPRKFT (218 aa)).

Belongs to the pseudouridine synthase TruD family.

It carries out the reaction uridine(13) in tRNA = pseudouridine(13) in tRNA. Could be responsible for synthesis of pseudouridine from uracil-13 in transfer RNAs. The chain is Probable tRNA pseudouridine synthase D from Saccharolobus solfataricus (strain ATCC 35092 / DSM 1617 / JCM 11322 / P2) (Sulfolobus solfataricus).